Reading from the N-terminus, the 291-residue chain is Protein US2 (291 aa).

N-acetylglycine; by host; partial is present on G2. The interval 251–270 is disordered; it reads PEVPDEQPTSPGRGPQETDP.

Belongs to the herpesviridae HHV-1 US2 protein family. Interacts with host KRT18.

The protein localises to the host cytoplasm. It is found in the host nucleus. The polypeptide is Protein US2 (Homo sapiens (Human)).